Consider the following 454-residue polypeptide: L-serine dehydratase TdcG (454 aa).

It belongs to the iron-sulfur dependent L-serine dehydratase family. [4Fe-4S] cluster is required as a cofactor.

The enzyme catalyses L-serine = pyruvate + NH4(+). The protein operates within amino-acid degradation; L-threonine degradation via propanoate pathway. The polypeptide is L-serine dehydratase TdcG (tdcG) (Escherichia coli (strain K12)).